We begin with the raw amino-acid sequence, 81 residues long: Cytotoxin 1d/1e (81 aa).

Positions 1-21 (MKTLLLTLVVVTIVCLDLGYT) are cleaved as a signal peptide. 4 disulfide bridges follow: C24-C42, C35-C59, C63-C74, and C75-C80.

This sequence belongs to the three-finger toxin family. Short-chain subfamily. Type IA cytotoxin sub-subfamily. As to quaternary structure, monomer in solution; Homodimer and oligomer in the presence of negatively charged lipids forming a pore with a size ranging between 20 and 30 Angstroms. Expressed by the venom gland.

It localises to the secreted. Its subcellular location is the target cell membrane. In terms of biological role, shows cytolytic activity on many different cells by forming pore in lipid membranes. In vivo, increases heart rate or kills the animal by cardiac arrest. In addition, it binds to heparin with high affinity, interacts with Kv channel-interacting protein 1 (KCNIP1) in a calcium-independent manner, and binds to integrin alpha-V/beta-3 (ITGAV/ITGB3) with moderate affinity. This chain is Cytotoxin 1d/1e, found in Naja atra (Chinese cobra).